We begin with the raw amino-acid sequence, 472 residues long: MTPRTEGMKKISRIHFVGVGGAGMSGIAEVLLNLGYRVSGSDLQQNANTRRLAERGAVISIGHEARHVETVDVVVVSSAVEQSNVEIDAARTARIPVISRAEMLAELMRFRYGVAVAGTHGKTTTTSLTASILAEGGLDPTFVIGGRLNSVGANAQLGQGEYLVAEADESDASFLHLQPMIAVVTNIDQDHMGTYGNDFGRLKDAFVEFLHHVPFYGAAVLCAEDPGVRDILPRLSKPYRTYGEREGVDIRAVGIQRLGLQSRFSVLRQGAEPLEITLNLPGYHNILNALAAIGVATELGVADAVIQRALAGFRGIGRRFQINACLNFGDGEITFVDDYGHHPSELAATLDSARNAWPDRRLVVVFQPHRYTRTRDLFEDFVQVLSRVDVLILLEVYSAGEAPIAGADGRSLSRAIRVRGQIDPIFAETPEEVFDILPNVLKPGDVVMTLGAGSVGVLAQQLPERLGSEAVP.

118-124 (GTHGKTT) serves as a coordination point for ATP.

This sequence belongs to the MurCDEF family.

It localises to the cytoplasm. It carries out the reaction UDP-N-acetyl-alpha-D-muramate + L-alanine + ATP = UDP-N-acetyl-alpha-D-muramoyl-L-alanine + ADP + phosphate + H(+). The protein operates within cell wall biogenesis; peptidoglycan biosynthesis. Its function is as follows. Cell wall formation. The protein is UDP-N-acetylmuramate--L-alanine ligase of Methylococcus capsulatus (strain ATCC 33009 / NCIMB 11132 / Bath).